The chain runs to 143 residues: Large ribosomal subunit protein bL17 (143 aa).

The protein belongs to the bacterial ribosomal protein bL17 family. In terms of assembly, part of the 50S ribosomal subunit. Contacts protein L32.

The polypeptide is Large ribosomal subunit protein bL17 (Bartonella quintana (strain Toulouse) (Rochalimaea quintana)).